A 643-amino-acid chain; its full sequence is Threonine--tRNA ligase 1 (643 aa).

A TGS domain is found at 3 to 64; the sequence is DMVKITFPDG…NEDGTVEIIT (62 aa). Residues 245–542 are catalytic; the sequence is DHRKLGKELK…LIEEHKGALP (298 aa). Residues cysteine 338, histidine 389, and histidine 519 each contribute to the Zn(2+) site.

This sequence belongs to the class-II aminoacyl-tRNA synthetase family. In terms of assembly, homodimer. Requires Zn(2+) as cofactor.

The protein resides in the cytoplasm. It catalyses the reaction tRNA(Thr) + L-threonine + ATP = L-threonyl-tRNA(Thr) + AMP + diphosphate + H(+). Functionally, catalyzes the attachment of threonine to tRNA(Thr) in a two-step reaction: L-threonine is first activated by ATP to form Thr-AMP and then transferred to the acceptor end of tRNA(Thr). Also edits incorrectly charged L-seryl-tRNA(Thr). The chain is Threonine--tRNA ligase 1 (thrS) from Bacillus subtilis (strain 168).